The primary structure comprises 287 residues: Ethanolamine ammonia-lyase small subunit (287 aa).

The adenosylcob(III)alamin site is built by valine 168, glutamate 189, and cysteine 218.

It belongs to the EutC family. As to quaternary structure, the basic unit is a heterodimer which dimerizes to form tetramers. The heterotetramers trimerize; 6 large subunits form a core ring with 6 small subunits projecting outwards. It depends on adenosylcob(III)alamin as a cofactor.

The protein localises to the bacterial microcompartment. It catalyses the reaction ethanolamine = acetaldehyde + NH4(+). It functions in the pathway amine and polyamine degradation; ethanolamine degradation. Functionally, catalyzes the deamination of various vicinal amino-alcohols to oxo compounds. Allows this organism to utilize ethanolamine as the sole source of nitrogen and carbon in the presence of external vitamin B12. In Pseudomonas syringae pv. tomato (strain ATCC BAA-871 / DC3000), this protein is Ethanolamine ammonia-lyase small subunit.